The primary structure comprises 77 residues: MAAIEVGRVCIKTLGREAGNVCVIVEVLDKNYIVVDGNVKRRRCNVKHVEPTDKKVELEKGASTEEVKLSLDAAGLL.

Belongs to the eukaryotic ribosomal protein eL14 family.

The polypeptide is Large ribosomal subunit protein eL14 (Methanococcus vannielii (strain ATCC 35089 / DSM 1224 / JCM 13029 / OCM 148 / SB)).